The sequence spans 720 residues: Putative fatty acid oxidation complex trifunctional enzyme (720 aa).

Residues 1 to 384 (MQNEIKKVCV…SWKYGPFELL (384 aa)) form a 3-hydroxyacyl-CoA dehydrogenase region. The enoyl-CoA hydratase/isomerase stretch occupies residues 453–720 (FVITTKMNCL…TIEKLKAIVK (268 aa)).

The protein in the N-terminal section; belongs to the 3-hydroxyacyl-CoA dehydrogenase family. This sequence in the C-terminal section; belongs to the enoyl-CoA hydratase/isomerase family.

The enzyme catalyses a (3S)-3-hydroxyacyl-CoA + NAD(+) = a 3-oxoacyl-CoA + NADH + H(+). It carries out the reaction a (3S)-3-hydroxyacyl-CoA = a (2E)-enoyl-CoA + H2O. It catalyses the reaction a 4-saturated-(3S)-3-hydroxyacyl-CoA = a (3E)-enoyl-CoA + H2O. The catalysed reaction is a (3Z)-enoyl-CoA = a 4-saturated (2E)-enoyl-CoA. The enzyme catalyses a (3E)-enoyl-CoA = a 4-saturated (2E)-enoyl-CoA. The sequence is that of Putative fatty acid oxidation complex trifunctional enzyme from Rickettsia felis (strain ATCC VR-1525 / URRWXCal2) (Rickettsia azadi).